The chain runs to 273 residues: 4-hydroxy-tetrahydrodipicolinate reductase (273 aa).

NAD(+) is bound by residues 12-17 and E38; that span reads GAGGRM. Residue R39 coordinates NADP(+). NAD(+) contacts are provided by residues 102–104 and 126–129; these read GTT and AANF. The Proton donor/acceptor role is filled by H159. Residue H160 coordinates (S)-2,3,4,5-tetrahydrodipicolinate. K163 functions as the Proton donor in the catalytic mechanism. Residue 169–170 coordinates (S)-2,3,4,5-tetrahydrodipicolinate; that stretch reads GT.

The protein belongs to the DapB family. In terms of assembly, homotetramer.

It localises to the cytoplasm. It carries out the reaction (S)-2,3,4,5-tetrahydrodipicolinate + NAD(+) + H2O = (2S,4S)-4-hydroxy-2,3,4,5-tetrahydrodipicolinate + NADH + H(+). The enzyme catalyses (S)-2,3,4,5-tetrahydrodipicolinate + NADP(+) + H2O = (2S,4S)-4-hydroxy-2,3,4,5-tetrahydrodipicolinate + NADPH + H(+). It functions in the pathway amino-acid biosynthesis; L-lysine biosynthesis via DAP pathway; (S)-tetrahydrodipicolinate from L-aspartate: step 4/4. In terms of biological role, catalyzes the conversion of 4-hydroxy-tetrahydrodipicolinate (HTPA) to tetrahydrodipicolinate. This is 4-hydroxy-tetrahydrodipicolinate reductase from Escherichia coli (strain K12 / MC4100 / BW2952).